The primary structure comprises 241 residues: uncharacterized protein (241 aa).

One can recognise an HTH luxR-type domain in the interval 147–212 (FSYRSVILTL…EMYAWINSAQ (66 aa)).

This is an uncharacterized protein from Escherichia coli O157:H7.